A 544-amino-acid chain; its full sequence is Chaperonin GroEL 1 (544 aa).

Residues 29–32 (TLGP), Lys-50, 86–90 (DGTTT), Gly-414, and Asp-494 each bind ATP.

The protein belongs to the chaperonin (HSP60) family. In terms of assembly, forms a cylinder of 14 subunits composed of two heptameric rings stacked back-to-back. Interacts with the co-chaperonin GroES.

It is found in the cytoplasm. It catalyses the reaction ATP + H2O + a folded polypeptide = ADP + phosphate + an unfolded polypeptide.. Functionally, together with its co-chaperonin GroES, plays an essential role in assisting protein folding. The GroEL-GroES system forms a nano-cage that allows encapsulation of the non-native substrate proteins and provides a physical environment optimized to promote and accelerate protein folding. This is Chaperonin GroEL 1 from Psychromonas ingrahamii (strain DSM 17664 / CCUG 51855 / 37).